A 227-amino-acid chain; its full sequence is Uracil-DNA glycosylase (227 aa).

D64 acts as the Proton acceptor in catalysis.

This sequence belongs to the uracil-DNA glycosylase (UDG) superfamily. UNG family.

It localises to the cytoplasm. It carries out the reaction Hydrolyzes single-stranded DNA or mismatched double-stranded DNA and polynucleotides, releasing free uracil.. Functionally, excises uracil residues from the DNA which can arise as a result of misincorporation of dUMP residues by DNA polymerase or due to deamination of cytosine. This is Uracil-DNA glycosylase from Serratia proteamaculans (strain 568).